We begin with the raw amino-acid sequence, 251 residues long: L-ascorbate peroxidase 2, cytosolic (251 aa).

The active-site Proton acceptor is histidine 43. Residues 113 to 137 (EVPFHPGRQDKPEPPPEGRLPDATQ) form a disordered region. The span at 119–132 (GRQDKPEPPPEGRL) shows a compositional bias: basic and acidic residues. Residue histidine 164 coordinates heme b. Residues threonine 165, threonine 181, asparagine 183, isoleucine 186, and aspartate 188 each contribute to the K(+) site.

Belongs to the peroxidase family. Ascorbate peroxidase subfamily. It depends on heme b as a cofactor. Expressed in aerial vegetative parts and reproductive organs. Expressed in roots, leaves, stems and flowers. Expressed in young leaves, internodes, blade ears, stems and anthers.

It localises to the cytoplasm. The catalysed reaction is L-ascorbate + H2O2 = L-dehydroascorbate + 2 H2O. With respect to regulation, inhibited by p-chloromercuriphenylsulfonic acid (CMPSA). In terms of biological role, plays a key role in hydrogen peroxide removal. Plays an important role in plant growth and development by protecting the seedlings from abiotic stresses through scavenging reactive oxygen species. Required for pollen viability. The chain is L-ascorbate peroxidase 2, cytosolic from Oryza sativa subsp. japonica (Rice).